Reading from the N-terminus, the 513-residue chain is Alpha,alpha-trehalose-phosphate synthase [UDP-forming] (513 aa).

Phosphotyrosine is present on Tyr-40. Residues Tyr-104 and Asp-158 each contribute to the D-glucose 6-phosphate site. UDP-binding residues include Arg-294 and Lys-299. Residues Arg-294 and Lys-299 each coordinate UDP-alpha-D-glucose. Arg-332 is a binding site for D-glucose 6-phosphate. 393–401 (DGMNLVSYE) is a binding site for UDP-alpha-D-glucose. 397–401 (LVSYE) is a UDP binding site. Phosphoserine is present on Ser-503.

This sequence belongs to the glycosyltransferase 20 family. Homomer. Component of the trehalose synthase complex that contains at least tps1, ntp1 and tpp1. Interacts with tpp1. Interacts with ntp1; the interaction is independent of stress conditions.

The protein localises to the cytoplasm. Its subcellular location is the nucleus. It carries out the reaction D-glucose 6-phosphate + UDP-alpha-D-glucose = alpha,alpha-trehalose 6-phosphate + UDP + H(+). Its pathway is carbohydrate biosynthesis. Its function is as follows. Synthase catalytic subunit of the trehalose synthase complex that catalyzes the production of trehalose from glucose-6-phosphate and UDP-alpha-D-glucose in a two step process. The disaccharide trehalose serves as a storage carbohydrate that is mobilized during nutrient stress and spore germination. Together with ntp1, regulates the level of trehalose as a protectant for cell integrity during thermal and osmotic stress. This chain is Alpha,alpha-trehalose-phosphate synthase [UDP-forming], found in Schizosaccharomyces pombe (strain 972 / ATCC 24843) (Fission yeast).